A 423-amino-acid polypeptide reads, in one-letter code: Phosphoribosylamine--glycine ligase (423 aa).

The 208-residue stretch at 107–314 folds into the ATP-grasp domain; sequence KAFMAKYNIP…LSDLVEAAID (208 aa). 133 to 194 lines the ATP pocket; it reads VNQKGAPIVI…EDFLQGEEAS (62 aa). Mg(2+)-binding residues include glutamate 284 and asparagine 286.

It belongs to the GARS family. Mg(2+) serves as cofactor. The cofactor is Mn(2+).

The enzyme catalyses 5-phospho-beta-D-ribosylamine + glycine + ATP = N(1)-(5-phospho-beta-D-ribosyl)glycinamide + ADP + phosphate + H(+). It functions in the pathway purine metabolism; IMP biosynthesis via de novo pathway; N(1)-(5-phospho-D-ribosyl)glycinamide from 5-phospho-alpha-D-ribose 1-diphosphate: step 2/2. The chain is Phosphoribosylamine--glycine ligase from Neisseria meningitidis serogroup B (strain ATCC BAA-335 / MC58).